Reading from the N-terminus, the 718-residue chain is MMEELHSLDPRRQELLEARFTGVGVSKGPLNSESSNQSLCSVGSLSDKEVETPEKKQNDQRNRKRKAEPYDTSQGKGTPRGHKISDYFERRAEQPLYGLDGSAAKEASEEQSALPTLMSVMLAKPRLDTEQLAPRGAGLCFTFVSAQQNSPSSTGSGNTEHSCSSQKQISIQHRQTQSDLTIEKISALENSKNSDLEKKEGRIDDLLRANCDLRRQIDEQQKMLEKYKERLNRCVTMSKKLLIEKSKQEKMACRDKSMQDRLRLGHFTTVRHGASFTEQWTDGYAFQNLIKQQERINSQREEIERQRKMLAKRKPPAMGQAPPATNEQKQRKSKTNGAENETLTLAEYHEQEEIFKLRLGHLKKEEAEIQAELERLERVRNLHIRELKRIHNEDNSQFKDHPTLNDRYLLLHLLGRGGFSEVYKAFDLTEQRYVAVKIHQLNKNWRDEKKENYHKHACREYRIHKELDHPRIVKLYDYFSLDTDSFCTVLEYCEGNDLDFYLKQHKLMSEKEARSIIMQIVNALKYLNEIKPPIIHYDLKPGNILLVNGTACGEIKITDFGLSKIMDDDSYNSVDGMELTSQGAGTYWYLPPECFVVGKEPPKISNKVDVWSVGVIFYQCLYGRKPFGHNQSQQDILQENTILKATEVQFPPKPVVTPEAKAFIRRCLAYRKEDRIDVQQLACDPYLLPHIRKSVSTSSPAGAAIASTSGASNNSSSN.

The interval 24-85 (GVSKGPLNSE…KGTPRGHKIS (62 aa)) is disordered. Polar residues predominate over residues 29 to 44 (PLNSESSNQSLCSVGS). Over residues 46–61 (SDKEVETPEKKQNDQR) the composition is skewed to basic and acidic residues. Serine 73, glutamine 94, leucine 99, and serine 102 each carry phosphoserine. Residues 147 to 176 (QQNSPSSTGSGNTEHSCSSQKQISIQHRQT) are disordered. Residues 193–244 (NSDLEKKEGRIDDLLRANCDLRRQIDEQQKMLEKYKERLNRCVTMSKKLLIE) form a required for interaction with TLK1 and DYNLL1/LC8 region. Coiled coils occupy residues 193–244 (NSDL…LLIE), 285–315 (AFQN…KRKP), and 349–397 (HEQE…DNSQ). The disordered stretch occupies residues 310–337 (LAKRKPPAMGQAPPATNEQKQRKSKTNG). Positions 408-687 (YLLLHLLGRG…VQQLACDPYL (280 aa)) constitute a Protein kinase domain. ATP contacts are provided by residues 414–422 (LGRGGFSEV) and lysine 437. Aspartate 538 (proton acceptor) is an active-site residue. Serine 696 carries the phosphoserine; by CHEK1 modification.

It belongs to the protein kinase superfamily. Ser/Thr protein kinase family. Monomer. May form homodimers; homodimerization may enhance autophosphoylation and enzymatic activity. Heterodimer with TLK1. Interacts with YWHAZ; association with 14-3-3 proteins such as YWHAZ regulates subcellular location. May also interact with FEZ1/LZTS1 and FEZ2. Interacts with CHD7 and CHD8. Interacts with DYNLL1/LC8. It depends on Mg(2+) as a cofactor. Phosphorylated at Ser-696, probably by CHEK1. Post-translationally, autophosphorylated; phosphorylation promotes the assembly of higher order oligomers and enzymatic activity. As to expression, ubiquitously expressed in all tissues examined, with high levels in heart and testis, in particular the pachytene spermatocytes and in round spermatids. Some evidence for the existence of a testis-specific isoform suggesting a role in spermatogenesis.

It localises to the nucleus. Its subcellular location is the nucleoplasm. The protein resides in the cytoplasm. The protein localises to the perinuclear region. It is found in the cytoskeleton. It catalyses the reaction L-seryl-[protein] + ATP = O-phospho-L-seryl-[protein] + ADP + H(+). It carries out the reaction L-threonyl-[protein] + ATP = O-phospho-L-threonyl-[protein] + ADP + H(+). Its activity is regulated as follows. Cell cycle-regulated, with maximal activity in the S-phase. Rapidly and transiently inhibited by phosphorylation following the generation of DNA double-stranded breaks during S-phase, probably by CHEK1, possibly at Ser-696. This inhibition is cell cycle checkpoint- and ATM-dependent. In terms of biological role, serine/threonine-protein kinase involved in the process of chromatin assembly and probably also DNA replication, transcription, repair, and chromosome segregation. Phosphorylates the chromatin assembly factors ASF1A and ASF1B. Phosphorylation of ASF1A prevents its proteasome-mediated degradation, thereby enhancing chromatin assembly. Negative regulator of amino acid starvation-induced autophagy. Its function is as follows. Testis-specific isoforms may play a role in spermatogenesis. Highly expressed in embryos throughout development. This Mus musculus (Mouse) protein is Serine/threonine-protein kinase tousled-like 2 (Tlk2).